The sequence spans 756 residues: ATP-dependent DNA helicase Hel308 (756 aa).

Residues Gln29 and 47-54 each bind ATP; that span reads SATASGKT. The Helicase ATP-binding domain occupies 34–201; sequence RAGLLNGENI…WLNAKLVKSD (168 aa). The short motif at 146–149 is the DEAH box element; it reads DEIH. The 203-residue stretch at 233 to 435 folds into the Helicase C-terminal domain; that stretch reads SLINLTVDTL…PTSLKFHTLS (203 aa).

This sequence belongs to the helicase family. Hel308 subfamily. As to quaternary structure, monomer.

The enzyme catalyses Couples ATP hydrolysis with the unwinding of duplex DNA by translocating in the 3'-5' direction.. It catalyses the reaction ATP + H2O = ADP + phosphate + H(+). Its function is as follows. DNA-dependent ATPase and 3'-5' DNA helicase that may be involved in repair of stalled replication forks. The protein is ATP-dependent DNA helicase Hel308 of Caldivirga maquilingensis (strain ATCC 700844 / DSM 13496 / JCM 10307 / IC-167).